The primary structure comprises 273 residues: Putative pyruvate, phosphate dikinase regulatory protein (273 aa).

153-160 is a binding site for ADP; that stretch reads GISRTSKT.

This sequence belongs to the pyruvate, phosphate/water dikinase regulatory protein family. PDRP subfamily.

It catalyses the reaction N(tele)-phospho-L-histidyl/L-threonyl-[pyruvate, phosphate dikinase] + ADP = N(tele)-phospho-L-histidyl/O-phospho-L-threonyl-[pyruvate, phosphate dikinase] + AMP + H(+). It carries out the reaction N(tele)-phospho-L-histidyl/O-phospho-L-threonyl-[pyruvate, phosphate dikinase] + phosphate + H(+) = N(tele)-phospho-L-histidyl/L-threonyl-[pyruvate, phosphate dikinase] + diphosphate. Functionally, bifunctional serine/threonine kinase and phosphorylase involved in the regulation of the pyruvate, phosphate dikinase (PPDK) by catalyzing its phosphorylation/dephosphorylation. The polypeptide is Putative pyruvate, phosphate dikinase regulatory protein (Rhizobium johnstonii (strain DSM 114642 / LMG 32736 / 3841) (Rhizobium leguminosarum bv. viciae)).